Reading from the N-terminus, the 223-residue chain is Icarapin (223 aa).

The first 19 residues, 1-19 (MKTLGVLFIAAWFIACTHS), serve as a signal peptide directing secretion. 4 N-linked (GlcNAc...) asparagine glycosylation sites follow: Asn-126, Asn-142, Asn-168, and Asn-193. The segment covering 186–203 (LPTLIGKNETSTQSSRSV) has biased composition (polar residues). A disordered region spans residues 186–223 (LPTLIGKNETSTQSSRSVESVEDFDNEIPKNQGDVLTA).

As to expression, expressed by the venom duct.

The protein localises to the secreted. This is Icarapin from Apis mellifera carnica (Carniolan honeybee).